The following is a 251-amino-acid chain: N-acetylmuramoyl-L-alanine amidase CwlA (251 aa).

An N-terminal signal peptide occupies residues 1–37 (MEIKQMLVPVSRYSVLCPYEMNPTEITFHNTYNDAPA). An N-acetylmuramoyl-L-alanine amidase domain is found at 38–140 (INERNNVANN…QERNGKYCPH (103 aa)).

It belongs to the N-acetylmuramoyl-L-alanine amidase 2 family.

The protein resides in the secreted. It carries out the reaction Hydrolyzes the link between N-acetylmuramoyl residues and L-amino acid residues in certain cell-wall glycopeptides.. In terms of biological role, autolysins are involved in some important biological processes such as cell separation, cell-wall turnover, competence for genetic transformation, formation of the flagella and sporulation. This is N-acetylmuramoyl-L-alanine amidase CwlA (cwlA) from Bacillus sp.